Reading from the N-terminus, the 516-residue chain is L-amino-acid oxidase (516 aa).

An N-terminal signal peptide occupies residues 1-18 (MNVFFMFSLLFLAALGSC). Residues Cys-28 and Cys-191 are joined by a disulfide bond. FAD contacts are provided by residues 61–62 (MA), 81–82 (EA), Arg-89, and 105–108 (GPMR). Arg-108 contributes to the substrate binding site. Asn-190 carries an N-linked (GlcNAc...) (complex) asparagine glycan. Residue His-241 coordinates substrate. Val-279 is an FAD binding site. A disulfide bridge links Cys-349 with Cys-430. Asn-379 is a glycosylation site (N-linked (GlcNAc...) (complex) asparagine). Tyr-390 provides a ligand contact to substrate. FAD contacts are provided by residues Glu-475 and 482 to 487 (GWIDST). Residue 482–483 (GW) coordinates substrate.

Homodimer; non-covalently linked. It depends on FAD as a cofactor. In terms of processing, N-glycosylated at Asn-190 and Asn-379 with bis-sialylated, biantennary, core-fucosylated dodecasaccharide (composed of N-acetylglucosamine, fucose, mannose, galactose, and sialic acid residues). Expressed by the venom gland.

It localises to the secreted. It catalyses the reaction an L-alpha-amino acid + O2 + H2O = a 2-oxocarboxylate + H2O2 + NH4(+). The enzyme catalyses L-leucine + O2 + H2O = 4-methyl-2-oxopentanoate + H2O2 + NH4(+). It carries out the reaction L-phenylalanine + O2 + H2O = 3-phenylpyruvate + H2O2 + NH4(+). The catalysed reaction is L-tryptophan + O2 + H2O = indole-3-pyruvate + H2O2 + NH4(+). It catalyses the reaction L-methionine + O2 + H2O = 4-methylsulfanyl-2-oxobutanoate + H2O2 + NH4(+). The enzyme catalyses L-isoleucine + O2 + H2O = (S)-3-methyl-2-oxopentanoate + H2O2 + NH4(+). It carries out the reaction L-arginine + O2 + H2O = 5-guanidino-2-oxopentanoate + H2O2 + NH4(+). The catalysed reaction is L-aspartate + O2 + H2O = oxaloacetate + H2O2 + NH4(+). It catalyses the reaction L-histidine + O2 + H2O = 3-(imidazol-5-yl)pyruvate + H2O2 + NH4(+). The enzyme catalyses L-2-aminohexanoate + O2 + H2O = 2-oxohexanoate + H2O2 + NH4(+). It carries out the reaction L-2-aminopentanoate + O2 + H2O = 2-oxopentanoate + H2O2 + NH4(+). Its function is as follows. Catalyzes an oxidative deamination of predominantly hydrophobic and aromatic L-amino acids, thus producing hydrogen peroxide that may contribute to the diverse toxic effects of this enzyme. Shows high affinity for L-Phe, L-Trp, L-Met, L-Leu, and L-Ile, moderate affinity for L-Arg, L-Asp, and L-His, and very low affinity for L-Gln, L-Lys, and L-Ala. Also shows high activity on L-norleucine (L-2-aminohexanoate), and L-norvaline (L-2-aminopentanoate) and a weak activity on L-ornithine and L-aminobutyric acid. Also exhibits diverse biological activities, such as hemorrhage, hemolysis, edema, apoptosis of vascular endothelial cells or tumor cell lines, and antiparasitic activities, as well as regulation of platelet aggregation. Its effect on platelets is controversial, since it either induces aggregation or inhibits agonist-induced aggregation. These different effects are probably due to different experimental conditions. A possible explanation of high efficacy it that LAAO may bind to target cells through its sialylated glycan moiety that would bind to sialic acid-binding lectins (siglec) on target cells. This interaction may result in production of locally high concentrations of hydrogen peroxide in or near the binding interface, leading, in turn to oxidative damage of the siglec or another adjacent cell structural elements. The polypeptide is L-amino-acid oxidase (Calloselasma rhodostoma (Malayan pit viper)).